Here is a 930-residue protein sequence, read N- to C-terminus: Translation initiation factor IF-2 (930 aa).

Disordered stretches follow at residues 160–179 (EPVE…FTDG) and 208–301 (AKRA…AAAP). The segment covering 208-227 (AKRAAEEAKRTQPRAEKPAD) has biased composition (basic and acidic residues). Composition is skewed to basic residues over residues 263 to 272 (GHGHKKHHHG) and 288 to 301 (KRGA…AAAP). One can recognise a tr-type G domain in the interval 431-600 (TRAPVVTVMG…SLQAEVLELT (170 aa)). The tract at residues 440–447 (GHVDHGKT) is G1. 440 to 447 (GHVDHGKT) lines the GTP pocket. The tract at residues 465-469 (GITQH) is G2. The interval 486–489 (DTPG) is G3. Residues 486–490 (DTPGH) and 540–543 (NKCD) contribute to the GTP site. The G4 stretch occupies residues 540–543 (NKCD). Positions 576 to 578 (SAH) are G5.

The protein belongs to the TRAFAC class translation factor GTPase superfamily. Classic translation factor GTPase family. IF-2 subfamily.

The protein localises to the cytoplasm. In terms of biological role, one of the essential components for the initiation of protein synthesis. Protects formylmethionyl-tRNA from spontaneous hydrolysis and promotes its binding to the 30S ribosomal subunits. Also involved in the hydrolysis of GTP during the formation of the 70S ribosomal complex. This Cellvibrio japonicus (strain Ueda107) (Pseudomonas fluorescens subsp. cellulosa) protein is Translation initiation factor IF-2.